The chain runs to 320 residues: Ubiquitin-like domain-containing CTD phosphatase 1 (320 aa).

The Ubiquitin-like domain maps to 6–77 (VVVIVKWSGK…LKPNFKLMMV (72 aa)). The FCP1 homology domain maps to 136 to 296 (PREGKKLLVL…LKLSDYLRKI (161 aa)). Mg(2+) contacts are provided by aspartate 146, aspartate 148, and aspartate 255.

Mg(2+) serves as cofactor.

Its subcellular location is the nucleus. It carries out the reaction O-phospho-L-seryl-[protein] + H2O = L-seryl-[protein] + phosphate. The catalysed reaction is O-phospho-L-threonyl-[protein] + H2O = L-threonyl-[protein] + phosphate. Dephosphorylates 26S nuclear proteasomes, thereby decreasing their proteolytic activity. Recruited to the 19S regulatory particle of the 26S proteasome where it dephosphorylates 19S component Rpt1 which impairs Rpt1 ATPase activity and disrupts 26S proteasome assembly. This is Ubiquitin-like domain-containing CTD phosphatase 1 from Drosophila melanogaster (Fruit fly).